Reading from the N-terminus, the 436-residue chain is 3-ketoacyl-CoA thiolase (436 aa).

The Acyl-thioester intermediate role is filled by cysteine 99. Catalysis depends on proton acceptor residues histidine 392 and cysteine 422.

This sequence belongs to the thiolase-like superfamily. Thiolase family. In terms of assembly, heterotetramer of two alpha chains (FadJ) and two beta chains (FadI).

It localises to the cytoplasm. It carries out the reaction an acyl-CoA + acetyl-CoA = a 3-oxoacyl-CoA + CoA. The protein operates within lipid metabolism; fatty acid beta-oxidation. Functionally, catalyzes the final step of fatty acid oxidation in which acetyl-CoA is released and the CoA ester of a fatty acid two carbons shorter is formed. In Yersinia pseudotuberculosis serotype O:1b (strain IP 31758), this protein is 3-ketoacyl-CoA thiolase.